A 1191-amino-acid chain; its full sequence is Rho GTPase-activating protein 20 (1191 aa).

The span at 1-23 (MEAMSPQQETLGGQPGRSSSLTG) shows a compositional bias: polar residues. Positions 1 to 45 (MEAMSPQQETLGGQPGRSSSLTGVSRLAGGSCTKKKMKTLAERRR) are disordered. Residue Ser-46 is modified to Phosphoserine. A PH domain is found at 78–180 (SLVCSNRTLL…EQKDKWLSLL (103 aa)). In terms of domain architecture, Ras-associating spans 194–295 (KSIPLKIFAK…TPFNLQEPFL (102 aa)). The Rho-GAP domain occupies 365–551 (ISLPNICEND…FLIENCLRIF (187 aa)). A phosphoserine mark is found at Ser-704 and Ser-730. Disordered stretches follow at residues 768–791 (SKKN…NHVK), 926–1014 (RLNL…SRPA), 1052–1123 (KKAK…RHCS), and 1140–1191 (HEEI…TKDI). The segment covering 934 to 961 (SYSSLSSPGTSPSGSSVSSQDSAFSQIS) has biased composition (low complexity). Polar residues-rich tracts occupy residues 962 to 981 (EHSV…TFQA) and 1103 to 1116 (PVQS…SPFQ). Positions 1182-1191 (IEDRYLTKDI) are enriched in basic and acidic residues.

Expressed predominantly in the brain. Lower expression is found in lymph nodes.

Functionally, GTPase activator for the Rho-type GTPases by converting them to an inactive GDP-bound state. The sequence is that of Rho GTPase-activating protein 20 (ARHGAP20) from Homo sapiens (Human).